Consider the following 351-residue polypeptide: tRNA pseudouridine synthase D (351 aa).

Catalysis depends on D81, which acts as the Nucleophile. The region spanning 158–304 is the TRUD domain; it reads GVPNYFGSQR…MRHERRAIEL (147 aa).

The protein belongs to the pseudouridine synthase TruD family.

The catalysed reaction is uridine(13) in tRNA = pseudouridine(13) in tRNA. Its function is as follows. Responsible for synthesis of pseudouridine from uracil-13 in transfer RNAs. The protein is tRNA pseudouridine synthase D of Aliivibrio fischeri (strain ATCC 700601 / ES114) (Vibrio fischeri).